Here is a 572-residue protein sequence, read N- to C-terminus: Methionine--tRNA ligase (572 aa).

A 'HIGH' region motif is present at residues 11 to 21; sequence PYINGIKHLGN. The Zn(2+) site is built by cysteine 143, cysteine 146, cysteine 156, and cysteine 159. Residues 346–350 carry the 'KMSKS' region motif; it reads QFSTS. Threonine 349 lines the ATP pocket.

This sequence belongs to the class-I aminoacyl-tRNA synthetase family. MetG type 1 subfamily. In terms of assembly, monomer. Zn(2+) is required as a cofactor.

Its subcellular location is the cytoplasm. The enzyme catalyses tRNA(Met) + L-methionine + ATP = L-methionyl-tRNA(Met) + AMP + diphosphate. Functionally, is required not only for elongation of protein synthesis but also for the initiation of all mRNA translation through initiator tRNA(fMet) aminoacylation. The sequence is that of Methionine--tRNA ligase from Paracoccus denitrificans (strain Pd 1222).